Consider the following 344-residue polypeptide: N-acetyl-gamma-glutamyl-phosphate reductase (344 aa).

The active site involves Cys149.

Belongs to the NAGSA dehydrogenase family. Type 1 subfamily.

The protein localises to the cytoplasm. The enzyme catalyses N-acetyl-L-glutamate 5-semialdehyde + phosphate + NADP(+) = N-acetyl-L-glutamyl 5-phosphate + NADPH + H(+). Its pathway is amino-acid biosynthesis; L-arginine biosynthesis; N(2)-acetyl-L-ornithine from L-glutamate: step 3/4. Functionally, catalyzes the NADPH-dependent reduction of N-acetyl-5-glutamyl phosphate to yield N-acetyl-L-glutamate 5-semialdehyde. The sequence is that of N-acetyl-gamma-glutamyl-phosphate reductase from Syntrophobacter fumaroxidans (strain DSM 10017 / MPOB).